A 312-amino-acid polypeptide reads, in one-letter code: Ribosomal protein L11 methyltransferase (312 aa).

The S-adenosyl-L-methionine site is built by Thr160, Gly181, Asp203, and Asn248.

Belongs to the methyltransferase superfamily. PrmA family.

The protein resides in the cytoplasm. The catalysed reaction is L-lysyl-[protein] + 3 S-adenosyl-L-methionine = N(6),N(6),N(6)-trimethyl-L-lysyl-[protein] + 3 S-adenosyl-L-homocysteine + 3 H(+). Methylates ribosomal protein L11. This chain is Ribosomal protein L11 methyltransferase, found in Fusobacterium nucleatum subsp. nucleatum (strain ATCC 25586 / DSM 15643 / BCRC 10681 / CIP 101130 / JCM 8532 / KCTC 2640 / LMG 13131 / VPI 4355).